The primary structure comprises 441 residues: Amino-acid acetyltransferase (441 aa).

The region spanning Glu-295–Ser-434 is the N-acetyltransferase domain.

It belongs to the acetyltransferase family. ArgA subfamily. In terms of assembly, homohexamer.

The protein resides in the cytoplasm. It catalyses the reaction L-glutamate + acetyl-CoA = N-acetyl-L-glutamate + CoA + H(+). It functions in the pathway amino-acid biosynthesis; L-arginine biosynthesis; N(2)-acetyl-L-ornithine from L-glutamate: step 1/4. The chain is Amino-acid acetyltransferase from Pectobacterium atrosepticum (strain SCRI 1043 / ATCC BAA-672) (Erwinia carotovora subsp. atroseptica).